Consider the following 544-residue polypeptide: CTP synthase (544 aa).

The interval 1–267 (MAKFVFVTGG…CRQVLDVLSL (267 aa)) is amidoligase domain. Ser-13 lines the CTP pocket. Position 13 (Ser-13) interacts with UTP. Residues 14 to 19 (SIGKGI) and Asp-71 each bind ATP. Residues Asp-71 and Glu-141 each coordinate Mg(2+). CTP is bound by residues 148 to 150 (DIE), 188 to 193 (KTKPTQ), and Lys-224. UTP-binding positions include 188–193 (KTKPTQ) and Lys-224. Residues 292 to 534 (KVALVGKYVQ…IQAASQRLPQ (243 aa)) enclose the Glutamine amidotransferase type-1 domain. L-glutamine is bound at residue Gly-354. Residue Cys-381 is the Nucleophile; for glutamine hydrolysis of the active site. L-glutamine contacts are provided by residues 382-385 (LGMQ), Glu-405, and Arg-462. Residues His-507 and Glu-509 contribute to the active site.

It belongs to the CTP synthase family. In terms of assembly, homotetramer.

It catalyses the reaction UTP + L-glutamine + ATP + H2O = CTP + L-glutamate + ADP + phosphate + 2 H(+). It carries out the reaction L-glutamine + H2O = L-glutamate + NH4(+). The catalysed reaction is UTP + NH4(+) + ATP = CTP + ADP + phosphate + 2 H(+). The protein operates within pyrimidine metabolism; CTP biosynthesis via de novo pathway; CTP from UDP: step 2/2. Allosterically activated by GTP, when glutamine is the substrate; GTP has no effect on the reaction when ammonia is the substrate. The allosteric effector GTP functions by stabilizing the protein conformation that binds the tetrahedral intermediate(s) formed during glutamine hydrolysis. Inhibited by the product CTP, via allosteric rather than competitive inhibition. Its function is as follows. Catalyzes the ATP-dependent amination of UTP to CTP with either L-glutamine or ammonia as the source of nitrogen. Regulates intracellular CTP levels through interactions with the four ribonucleotide triphosphates. The protein is CTP synthase of Synechococcus sp. (strain RCC307).